The following is a 1522-amino-acid chain: Lysophospholipase NTE1 (1522 aa).

Topologically, residues 1-73 are lumenal; sequence MVDGTYVNSS…SLLVYLINGT (73 aa). Residues 74 to 94 form a helical membrane-spanning segment; sequence VPFYLVVLGSVFTPIIVYLIL. The Cytoplasmic portion of the chain corresponds to 95-1522; it reads RSRVLSAYSR…IHLLHRRNSI (1428 aa). Disordered regions lie at residues 443–468, 485–523, and 535–556; these read SVQE…TPNK, DLLS…ASSP, and SQNF…PSVV. 2 stretches are compositionally biased toward low complexity: residues 498-511 and 540-555; these read KTAS…PRIS and PLSS…KPSV. Residues 661-782 and 778-918 each bind a nucleoside 3',5'-cyclic phosphate; these read PINV…LTKL and TLTK…VAHK. 2 disordered regions span residues 828 to 852 and 1125 to 1145; these read QKSK…DNQP and SSQN…GAPP. The PNPLA domain occupies 1219 to 1383; sequence LVLGGGGARG…LDNLPVLEMK (165 aa). Positions 1223–1228 match the GXGXXG motif; sequence GGGARG. Positions 1250 to 1254 match the GXSXG motif; the sequence is GTSIG. The active-site Nucleophile is the Ser1252. Asp1370 acts as the Proton acceptor in catalysis. The DGA/G motif lies at 1370–1372; it reads DGG.

Belongs to the NTE family.

The protein resides in the endoplasmic reticulum membrane. The catalysed reaction is a 1-acyl-sn-glycero-3-phosphocholine + H2O = sn-glycerol 3-phosphocholine + a fatty acid + H(+). With respect to regulation, inhibited by organophosphorus esters. Intracellular phospholipase B that catalyzes the double deacylation of phosphatidylcholine (PC) to glycerophosphocholine (GroPCho). Plays an important role in membrane lipid homeostasis. Responsible for the rapid PC turnover in response to inositol, elevated temperatures, or when choline is present in the growth medium. This is Lysophospholipase NTE1 (NTE1) from Eremothecium gossypii (strain ATCC 10895 / CBS 109.51 / FGSC 9923 / NRRL Y-1056) (Yeast).